Consider the following 91-residue polypeptide: Small ribosomal subunit protein uS19 (91 aa).

Belongs to the universal ribosomal protein uS19 family.

Functionally, protein S19 forms a complex with S13 that binds strongly to the 16S ribosomal RNA. The chain is Small ribosomal subunit protein uS19 from Pseudomonas syringae pv. tomato (strain ATCC BAA-871 / DC3000).